Here is a 364-residue protein sequence, read N- to C-terminus: MKKLKKFVTKPHIFFRDALNNKYPIINNEQGIKELDERAVLSHQENLEKLESSLMNTPIPIDVVFTWVNDKDEKWQEKKQHYSKLANNYAFYAKDNVRFEEHNELFYSVKSVQKFLPWVRYIFIVTDNQIPHWLNNEDSQIKIVDHREIIDHDYLPTFNSHVIEANLHKIPNLSEHFIYFNDDVFVAKPLKKSHFFKPNGLASIFLSIKNLDKMYAKGTTTPTLLASMNSRRLLRKMYGQELNIQTPLIHSYIPLKKSVFEKIWSVFKEEIESFLSNRFRGKNDLNLATFFVPYAMYLEGKSVLTPEICYYFNIRSANAKAQYKKLLQKKENGNRPHSFCINDTSSSNNHFYHKNFNTFINLYF.

It belongs to the stealth family.

Part of a group II capsule biosynthesis locus. This chain is Capsular polysaccharide phosphotransferase fcs1 (fcs1), found in Haemophilus influenzae.